The sequence spans 919 residues: Alanine--tRNA ligase (919 aa).

Residues histidine 565, histidine 569, cysteine 667, and histidine 671 each coordinate Zn(2+).

This sequence belongs to the class-II aminoacyl-tRNA synthetase family. Zn(2+) serves as cofactor.

The protein resides in the cytoplasm. The catalysed reaction is tRNA(Ala) + L-alanine + ATP = L-alanyl-tRNA(Ala) + AMP + diphosphate. Catalyzes the attachment of alanine to tRNA(Ala) in a two-step reaction: alanine is first activated by ATP to form Ala-AMP and then transferred to the acceptor end of tRNA(Ala). Also edits incorrectly charged Ser-tRNA(Ala) and Gly-tRNA(Ala) via its editing domain. The chain is Alanine--tRNA ligase from Leptospira biflexa serovar Patoc (strain Patoc 1 / Ames).